We begin with the raw amino-acid sequence, 163 residues long: Nucleotide-binding protein Cj0374 (163 aa).

Belongs to the YajQ family.

Its function is as follows. Nucleotide-binding protein. This is Nucleotide-binding protein Cj0374 from Campylobacter jejuni subsp. jejuni serotype O:2 (strain ATCC 700819 / NCTC 11168).